The following is a 173-amino-acid chain: Putative metal-dependent hydrolase BCE_2729 (173 aa).

Residues H65, H156, and H160 each contribute to the Zn(2+) site.

Belongs to the metal hydrolase YfiT family. In terms of assembly, homodimer. Zn(2+) serves as cofactor.

It localises to the cytoplasm. Possible metal-dependent hydrolase. This is Putative metal-dependent hydrolase BCE_2729 from Bacillus cereus (strain ATCC 10987 / NRS 248).